The following is a 944-amino-acid chain: Protein translocase subunit SecA (944 aa).

Residues Gln-96, 114–118, and Asp-554 contribute to the ATP site; that span reads GEGKT.

Belongs to the SecA family. In terms of assembly, monomer and homodimer. Part of the essential Sec protein translocation apparatus which comprises SecA, SecYEG and auxiliary proteins SecDF. Other proteins may also be involved.

The protein resides in the cell inner membrane. It localises to the cytoplasm. It catalyses the reaction ATP + H2O + cellular proteinSide 1 = ADP + phosphate + cellular proteinSide 2.. Part of the Sec protein translocase complex. Interacts with the SecYEG preprotein conducting channel. Has a central role in coupling the hydrolysis of ATP to the transfer of proteins into and across the cell membrane, serving as an ATP-driven molecular motor driving the stepwise translocation of polypeptide chains across the membrane. The chain is Protein translocase subunit SecA from Hydrogenobaculum sp. (strain Y04AAS1).